Consider the following 629-residue polypeptide: Kelch-like protein 8 (629 aa).

Residues 1-10 are compositionally biased toward polar residues; the sequence is MASESTNGKQ. A disordered region spans residues 1–40; that stretch reads MASESTNGKQARSHVTKGRRQYQHQHQQQQQQQQQVRSRS. Alanine 2 is subject to N-acetylalanine. Residues 11 to 23 show a composition bias toward basic residues; sequence ARSHVTKGRRQYQ. A compositionally biased stretch (low complexity) spans 24-35; sequence HQHQQQQQQQQQ. The BTB domain occupies 76 to 143; the sequence is CDVTLKVGSK…VYSSRLTLTV (68 aa). Residues 178–279 form the BACK domain; the sequence is CLAVRAFAES…LPVDFLMGVV (102 aa). Kelch repeat units follow at residues 328–375, 376–422, 424–469, 471–516, 517–563, and 565–610; these read VLFC…SVEG, KVYA…SLGG, IYAI…ALIN, VYAV…ELHG, CLYV…TVMG, and IFAV…VCDC.

Component of the BCR(KLHL8) E3 ubiquitin ligase complex, at least composed of CUL3, KLHL8 and RBX1. Interacts with RAPSN.

It participates in protein modification; protein ubiquitination. Functionally, substrate-specific adapter of a BCR (BTB-CUL3-RBX1) E3 ubiquitin ligase complex required for The BCR(KLHL8) ubiquitin ligase complex mediates ubiquitination and degradation of RAPSN. The polypeptide is Kelch-like protein 8 (Klhl8) (Mus musculus (Mouse)).